The following is a 125-amino-acid chain: Ribosome-binding factor A (125 aa).

This sequence belongs to the RbfA family. In terms of assembly, monomer. Binds 30S ribosomal subunits, but not 50S ribosomal subunits or 70S ribosomes.

The protein resides in the cytoplasm. One of several proteins that assist in the late maturation steps of the functional core of the 30S ribosomal subunit. Associates with free 30S ribosomal subunits (but not with 30S subunits that are part of 70S ribosomes or polysomes). Required for efficient processing of 16S rRNA. May interact with the 5'-terminal helix region of 16S rRNA. The polypeptide is Ribosome-binding factor A (Xylella fastidiosa (strain M23)).